The sequence spans 224 residues: ATP synthase subunit a (224 aa).

6 helical membrane-spanning segments follow: residues 17–37 (LSLNWLSTFLGLLMIPSIYWL), 72–92 (IFISLFSLILFNNFMGLFPYI), 99–119 (LTLTLSLALPLWLCFMLYGWI), 125–145 (MFAHLVPQGTPAILMPFMVCI), 170–190 (LLLTLLGNTGPSMSYLLVTFL), and 195–215 (IALLVLESAVAMIQSYVFAVL).

It belongs to the ATPase A chain family. In terms of assembly, F-type ATPases have 2 components, CF(1) - the catalytic core - and CF(0) - the membrane proton channel. CF(1) has five subunits: alpha(3), beta(3), gamma(1), delta(1), epsilon(1). CF(0) has three main subunits: a, b and c.

Its subcellular location is the mitochondrion inner membrane. Its function is as follows. Mitochondrial membrane ATP synthase (F(1)F(0) ATP synthase or Complex V) produces ATP from ADP in the presence of a proton gradient across the membrane which is generated by electron transport complexes of the respiratory chain. F-type ATPases consist of two structural domains, F(1) - containing the extramembraneous catalytic core and F(0) - containing the membrane proton channel, linked together by a central stalk and a peripheral stalk. During catalysis, ATP synthesis in the catalytic domain of F(1) is coupled via a rotary mechanism of the central stalk subunits to proton translocation. Key component of the proton channel; it may play a direct role in the translocation of protons across the membrane. The chain is ATP synthase subunit a (mt:ATPase6) from Drosophila simulans (Fruit fly).